A 253-amino-acid chain; its full sequence is GTP cyclohydrolase III 2 (253 aa).

A disordered region spans residues 102-125; the sequence is LRDAGSAQDENRQEALSHRSPPGF.

The protein belongs to the archaeal-type GTP cyclohydrolase family.

It carries out the reaction GTP + 3 H2O = 2-amino-5-formylamino-6-(5-phospho-D-ribosylamino)pyrimidin-4(3H)-one + 2 phosphate + 2 H(+). Catalyzes the formation of 2-amino-5-formylamino-6-ribofuranosylamino-4(3H)-pyrimidinone ribonucleotide monophosphate and inorganic phosphate from GTP. Also has an independent pyrophosphate phosphohydrolase activity. This is GTP cyclohydrolase III 2 (gch32) from Halobacterium salinarum (strain ATCC 700922 / JCM 11081 / NRC-1) (Halobacterium halobium).